The chain runs to 674 residues: HDA1 complex subunit 2 (674 aa).

Polar residues predominate over residues Thr-185–Pro-196. The interval Thr-185–Tyr-211 is disordered. The segment covering Asn-197–Tyr-211 has biased composition (low complexity). Positions Phe-468–Thr-637 form a coiled coil.

Belongs to the HDA2/3 family. HDA2 subfamily. Heterodimer with HDA3. Component of the HDA1 histone deacetylase complex composed of at least one HDA1 homodimer and one HDA2/HDA3 heterodimer. Interacts with HDA1 and HDA3.

The protein resides in the nucleus. Functionally, required for activity of HDA1 histone deacetylase complex. The HDA1 histone deacetylase complex is responsible for the deacetylation of lysine residues on the N-terminal part of the core histones (H2A, H2B, H3 and H4). Histone deacetylation gives a tag for epigenetic repression and plays an important role in transcriptional regulation, cell cycle progression and developmental events. In Saccharomyces cerevisiae (strain ATCC 204508 / S288c) (Baker's yeast), this protein is HDA1 complex subunit 2 (HDA2).